Consider the following 596-residue polypeptide: Aspartate--tRNA(Asp/Asn) ligase (596 aa).

Glutamate 175 contributes to the L-aspartate binding site. Positions 199-202 are aspartate; it reads QQYK. 2 residues coordinate L-aspartate: arginine 221 and histidine 454. Position 221–223 (221–223) interacts with ATP; that stretch reads RDE. Residue glutamate 488 coordinates ATP. Residue arginine 495 participates in L-aspartate binding. 540–543 lines the ATP pocket; the sequence is GIDR.

This sequence belongs to the class-II aminoacyl-tRNA synthetase family. Type 1 subfamily. Homodimer.

It localises to the cytoplasm. It catalyses the reaction tRNA(Asx) + L-aspartate + ATP = L-aspartyl-tRNA(Asx) + AMP + diphosphate. Its function is as follows. Aspartyl-tRNA synthetase with relaxed tRNA specificity since it is able to aspartylate not only its cognate tRNA(Asp) but also tRNA(Asn). Reaction proceeds in two steps: L-aspartate is first activated by ATP to form Asp-AMP and then transferred to the acceptor end of tRNA(Asp/Asn). In Rhizobium leguminosarum bv. trifolii (strain WSM2304), this protein is Aspartate--tRNA(Asp/Asn) ligase.